A 135-amino-acid chain; its full sequence is Protein NrdI (135 aa).

Belongs to the NrdI family.

Probably involved in ribonucleotide reductase function. In Pectobacterium carotovorum subsp. carotovorum (strain PC1), this protein is Protein NrdI.